A 169-amino-acid chain; its full sequence is Putative outer membrane protein BBA03 (169 aa).

It localises to the cell outer membrane. This chain is Putative outer membrane protein BBA03, found in Borreliella burgdorferi (strain ATCC 35210 / DSM 4680 / CIP 102532 / B31) (Borrelia burgdorferi).